The following is a 484-amino-acid chain: Antibiotic efflux pump outer membrane protein ArpC (484 aa).

Residues 1-17 (MTKSLLSLAVTAFILGG) form the signal peptide. Cys18 is lipidated: N-palmitoyl cysteine. Cys18 carries S-diacylglycerol cysteine lipidation.

Belongs to the outer membrane factor (OMF) (TC 1.B.17) family.

The protein resides in the cell outer membrane. The outer membrane component of an antibiotic efflux pump. Confers resistance to numerous structurally unrelated antibiotics such as carbenicillin, chloramphenicol, erythromycin, novobiocin, streptomycin and tetracycline. Is not involved in organic solvent efflux. The sequence is that of Antibiotic efflux pump outer membrane protein ArpC (arpC) from Pseudomonas putida (Arthrobacter siderocapsulatus).